The primary structure comprises 422 residues: Hexuronate transporter (422 aa).

11 helical membrane passes run 9 to 29 (VILF…ALSI), 45 to 65 (MGLI…LGGV), 82 to 102 (VWSL…LLII), 141 to 161 (TPLG…AFSW), 163 to 183 (VSFV…FKFV), 219 to 239 (LFTA…LTWF), 256 to 276 (VITV…GFVS), 294 to 314 (VVLV…GLVA), 321 to 341 (TLVA…WAVI), 356 to 376 (FMHF…GFIV), and 381 to 401 (TFSG…LAVI).

This sequence belongs to the major facilitator superfamily. Phthalate permease family.

The protein localises to the cell membrane. It carries out the reaction aldehydo-D-glucuronate(in) + H(+)(in) = aldehydo-D-glucuronate(out) + H(+)(out). The catalysed reaction is aldehydo-D-galacturonate(out) + H(+)(out) = aldehydo-D-galacturonate(in) + H(+)(in). Transport of aldohexuronates such as D-glucuronate and D-galacturonate. In Bacillus subtilis (strain 168), this protein is Hexuronate transporter.